The primary structure comprises 197 residues: dITP/XTP pyrophosphatase (197 aa).

Residue 8-13 (TGNPGK) participates in substrate binding. Mg(2+)-binding residues include Glu40 and Asp69. The active-site Proton acceptor is the Asp69. Residues Ser70, 154–157 (FGYD), Lys177, and 182–183 (HR) each bind substrate.

Belongs to the HAM1 NTPase family. In terms of assembly, homodimer. The cofactor is Mg(2+).

The enzyme catalyses XTP + H2O = XMP + diphosphate + H(+). It catalyses the reaction dITP + H2O = dIMP + diphosphate + H(+). The catalysed reaction is ITP + H2O = IMP + diphosphate + H(+). Its function is as follows. Pyrophosphatase that catalyzes the hydrolysis of nucleoside triphosphates to their monophosphate derivatives, with a high preference for the non-canonical purine nucleotides XTP (xanthosine triphosphate), dITP (deoxyinosine triphosphate) and ITP. Seems to function as a house-cleaning enzyme that removes non-canonical purine nucleotides from the nucleotide pool, thus preventing their incorporation into DNA/RNA and avoiding chromosomal lesions. The protein is dITP/XTP pyrophosphatase of Yersinia pestis.